The sequence spans 1346 residues: Proline-rich protein 36 (1346 aa).

6 disordered regions span residues 1–403, 426–512, 537–606, 633–679, 711–1155, and 1168–1240; these read MDNK…TQLI, SVSS…QATP, PLTT…PSPL, PRQT…VSPL, LETQ…AELA, and PPLA…RSPK. The span at 10-26 shows a compositional bias: low complexity; the sequence is AGAAARTPAARAPGLLT. Pro residues predominate over residues 27 to 40; that stretch reads PRPPGSPRPPPPVT. Composition is skewed to low complexity over residues 41 to 55 and 86 to 97; these read PAALRVLGAAGAVGR and SSRNPASRPPAS. A compositionally biased stretch (basic and acidic residues) spans 137–152; that stretch reads SAEETVARGKATEAPK. Residues 165 to 177 are compositionally biased toward low complexity; that stretch reads SGPTPGTPSPAMA. Positions 191–203 are enriched in pro residues; sequence RPAPSARPRPPTE. Over residues 208-220 the composition is skewed to polar residues; that stretch reads SVSSASEHSTTEP. Composition is skewed to low complexity over residues 235 to 255 and 293 to 312; these read QRPASRSLSSSATPLSSPARS and APALGPLSSSPLATPSPSGT. 3 stretches are compositionally biased toward pro residues: residues 329–343, 371–380, and 387–397; these read ATLPPSPPVTPPPPA, PLAPPSPSAP, and PSPPATPPSQV. Residues 426-464 are compositionally biased toward low complexity; the sequence is SVSSPLQSMPPTQANPALPSLPTLLSPLATPPLSAMSPL. The span at 494 to 506 shows a compositional bias: pro residues; the sequence is TPPPQASPSPSPP. Residues 546–558 are compositionally biased toward low complexity; the sequence is PPLVSPSLLASPP. The segment covering 559–578 has biased composition (pro residues); it reads LQAPPHPQAPPSMTTPPMQA. Polar residues predominate over residues 633–647; that stretch reads PRQTQASLISPSRPA. A compositionally biased stretch (pro residues) spans 648–657; that stretch reads STPPDSPPLQ. Residues 658–679 show a composition bias toward low complexity; the sequence is APLSLPASPPLQTSLSPAVSPL. Over residues 724 to 733 the composition is skewed to polar residues; it reads TPPASLTTPP. Pro residues-rich tracts occupy residues 781 to 821 and 829 to 865; these read ETPP…PALA and PSPPLSPLATPPPQAPPALALPPLQAPPSPPASPPLS. The segment covering 866-875 has biased composition (low complexity); that stretch reads PLATPSPQAP. Composition is skewed to pro residues over residues 887-917, 926-997, and 1004-1015; these read FSPPPSPPVQAPFSPPASPPVSPSATPPSQA, LQVP…PPAS, and AKPPPQAPPALA. Low complexity-rich tracts occupy residues 1029–1046, 1137–1146, and 1224–1239; these read FPGQAPFSPSASLPMSPL, DSGPEGGAAA, and GKAAAGAGAGASSRSP. The residue at position 1310 (S1310) is a Phosphoserine.

This Homo sapiens (Human) protein is Proline-rich protein 36.